We begin with the raw amino-acid sequence, 641 residues long: Chaperone protein DnaK (641 aa).

A Phosphothreonine; by autocatalysis modification is found at threonine 201. Positions 604–622 (ASAEQGGAAPGADAGNAGK) are enriched in low complexity. Positions 604–625 (ASAEQGGAAPGADAGNAGKAQD) are disordered.

This sequence belongs to the heat shock protein 70 family.

Acts as a chaperone. The polypeptide is Chaperone protein DnaK (Stenotrophomonas maltophilia (strain R551-3)).